Here is a 393-residue protein sequence, read N- to C-terminus: NAD(P)H-quinone oxidoreductase subunit H, chloroplastic (393 aa).

The protein belongs to the complex I 49 kDa subunit family. As to quaternary structure, NDH is composed of at least 16 different subunits, 5 of which are encoded in the nucleus.

The protein resides in the plastid. It localises to the chloroplast thylakoid membrane. The enzyme catalyses a plastoquinone + NADH + (n+1) H(+)(in) = a plastoquinol + NAD(+) + n H(+)(out). The catalysed reaction is a plastoquinone + NADPH + (n+1) H(+)(in) = a plastoquinol + NADP(+) + n H(+)(out). Its function is as follows. NDH shuttles electrons from NAD(P)H:plastoquinone, via FMN and iron-sulfur (Fe-S) centers, to quinones in the photosynthetic chain and possibly in a chloroplast respiratory chain. The immediate electron acceptor for the enzyme in this species is believed to be plastoquinone. Couples the redox reaction to proton translocation, and thus conserves the redox energy in a proton gradient. The chain is NAD(P)H-quinone oxidoreductase subunit H, chloroplastic from Arabis hirsuta (Hairy rock-cress).